We begin with the raw amino-acid sequence, 481 residues long: PRAME family member 22 (481 aa).

An LRR 1; degenerate repeat occupies 99–126 (RWKLQVLELRDVDENFWTIWSGARPLSC). Residues 181–205 (HLCCTKVVNYSMSILNFRNILETVY) form an LRR 2; degenerate repeat. Residues 206 to 232 (PDSIQVLEIWNMCWPCMIVEFSRYLSQ) form an LRR 3; degenerate repeat. An LRR 4; degenerate repeat occupies 233–267 (MRNLRKLFISDGCRYLLSSDSQEQLVAEFSSVLLR). LRR repeat units follow at residues 268–293 (LEYLQMLYVRRVCFFRGHLDQLIRCL), 294–325 (RSPLETLALTYGFLEKVDLKCLPRYPSLSQLK), 326–344 (QLNLSHGALRFIRLEPLRA), 350–377 (AATLQTLFLVDCGIRDSKLRVILPALSC), and 378–402 (CSNLTTFCFHGNDTSMDGLKDLLRH).

Belongs to the PRAME family.

The polypeptide is PRAME family member 22 (Homo sapiens (Human)).